Here is a 397-residue protein sequence, read N- to C-terminus: Tryptophan synthase beta chain (397 aa).

Position 87 is an N6-(pyridoxal phosphate)lysine (Lys87).

This sequence belongs to the TrpB family. In terms of assembly, tetramer of two alpha and two beta chains. It depends on pyridoxal 5'-phosphate as a cofactor.

The catalysed reaction is (1S,2R)-1-C-(indol-3-yl)glycerol 3-phosphate + L-serine = D-glyceraldehyde 3-phosphate + L-tryptophan + H2O. It participates in amino-acid biosynthesis; L-tryptophan biosynthesis; L-tryptophan from chorismate: step 5/5. In terms of biological role, the beta subunit is responsible for the synthesis of L-tryptophan from indole and L-serine. The protein is Tryptophan synthase beta chain of Enterobacter sp. (strain 638).